A 1610-amino-acid chain; its full sequence is MNTRKEELQDRAIVRIAAHLPDLIVYGDFSPQRPSVDYFDGVLMFVDISGFTAMTEKFSTAMYMDRGAEQLVEILNYYISAIVEKVLIFGGDILKFAGDALLALWKVERKQLKNIITVVIKCSLEIHGLFGTQESEEGLDIRVKIGLAAGHISMLVFGDETRNHFLVIGQAVDDVRLAQNMARMNDVILSPNCWQLCDRSMIEIERIPDQRAVKVNFLKPPPSFNFDEFFNKCMTFMDYYPSGDHKNLLRLACMLESDPDLELSLQKYVMESILKQIDDKQLRGYLSELRPVTIVFVNLMFQDQNKAEVIGSAIQDACVHISSVLKVFRGQINKVFMFDKGCSFLCVFGFPGEKAPDEVTHALESAVDIFDFCSQVHKIHTVSIGVASGIVFCGIVGHTVRHEYTVIGQKVNIAARMMMYYPGIVTCDSVTYNGSNLPPYFFKELPKKLMKGVGDSGPVYQCLGLNEKVMFGMAYLTCNRNEGYPLLGRDKEIKYFMCTMKEFLMSNCSRVLMYEGLSGFGKSRILMEIEYLAQGENHRTIAIALTKVSFHQNFYTIQILMANVLGLDTCKHYKERQTNLQNKVKTLLDEKFHCLLNDIFHVQFPISREISKMSTFRKQKQLEALFMKILEQTVKEERIIFIIDEAQFVDYASWIFMEKLIRTVPIFIIMSLSPFTEIPCAAASAIMKNRNTTYVTLGAVQPNDIRNKVCLDLNVSSIPKELDLYLVEGSCGIPFYCEELVKNLDHHRVLVFQQMETEEKTKVTWNNLFKNFIKPTEEFKMSGLGNEEGTEEICKLASGVRLKNLSPPASLKEISLVQLDSMSLSHQMLVRCAAIIGLTFTTELLFEILPCWNMKMMIKALATLVESNIFDCFRDGKDLRLALKQNAASFEVHNRSLSLQPTEGIAHGEEEELRELESEVIECHIIRFCKPMMQKTAYELWLKDQKKAMHLKCARFLEENAHRCDHCRSGDFIPYHHFTVDIRLNTLDMDTIKKMATSHGFETEEEIKISRAGIPKNSELFSENLSPEEIGERILGFFDVILTKMKTSKEDIIPLESCQCEEILEIVILPLAQHFLALGENNKALYYFLEITSAYLTLGDNYMAYMYLNEGERLLKTLKKEKSWSQTFESATFYSLKGQVCFNMGQMVLAKKMLRKALKLLNRIFPYNLISLFLHTHMEKNRHFHYVTQQAQESSPPGKKRLAHLYQQTACFSLLWQIYSLNYFFHHKYYGHLAAMMELNTALETQNDFQIIKAYLDYAMYHHLAGYQGVWFKYEVKAMEQIFNLPLKGEGIEIVAYVAGKLSYIKLMMGYLDLAIELGARAHKMWALLQNPNQHYVVLCRLSKSLFLKNRYKHLIQMLRRLWDLSVAEGHIISKAFFYLVCLDIMLYSGFVYRTFEECLEFIIQNEDNRILKFQSGLLLGLYSSIAIWYGRLQEWDNFYVFSNRAKTLVSRRTPTILYYDGVSRYMEGQVLQLQKQIEEQSETAQDSGVELLKSLESLVAQNTTGPVFYPRLYHLMAYICILMGDGQNCDLFLNTALKLSEIQGNVLEKCWLNMSKEWWYSNCTLTEDQWLHTILSLPAWEKIVSGKVNIHDVQKNKFLMRVNILDNPF.

2 Guanylate cyclase domains span residues 42–179 (VLMF…RLAQ) and 293–418 (TIVF…ARMM). Residues aspartate 47 and isoleucine 48 each contribute to the Mg(2+) site. 47–52 (DISGFT) is an ATP binding site. Lysine 95 lines the hydrogencarbonate pocket. Mg(2+) is bound at residue aspartate 99. ATP-binding residues include aspartate 99 and lysine 144. Residues valine 167, arginine 176, and methionine 337 each contribute to the hydrogencarbonate site. ATP-binding positions include valine 406 and 412 to 416 (NIAAR).

Belongs to the adenylyl cyclase class-4/guanylyl cyclase family. The cofactor is Mg(2+). Mn(2+) is required as a cofactor.

The protein resides in the cell membrane. It localises to the cytoplasm. It is found in the cytoskeleton. Its subcellular location is the perinuclear region. The protein localises to the nucleus. The protein resides in the cell projection. It localises to the cilium. The catalysed reaction is ATP = 3',5'-cyclic AMP + diphosphate. Its activity is regulated as follows. Activated by manganese or magnesium ions. In the presence of magnesium ions, the enzyme is activated by bicarbonate. Calcium mildly increases the enzyme activity, also in the presence of magnesium ions. Its function is as follows. Catalyzes the formation of the signaling molecule cAMP. May function as sensor that mediates responses to changes in cellular bicarbonate and CO(2) levels. Has a critical role in mammalian spermatogenesis by producing the cAMP which regulates cAMP-responsive nuclear factors indispensable for sperm maturation in the epididymis. Induces capacitation, the maturational process that sperm undergo prior to fertilization. Involved in ciliary beat regulation. This Oryctolagus cuniculus (Rabbit) protein is Adenylate cyclase type 10 (ADCY10).